The following is a 518-amino-acid chain: Bifunctional purine biosynthesis protein PurH (518 aa).

The 146-residue stretch at 1–146 folds into the MGS-like domain; sequence MSPIALLSVS…KNHQDVLVVT (146 aa).

This sequence belongs to the PurH family.

It catalyses the reaction (6R)-10-formyltetrahydrofolate + 5-amino-1-(5-phospho-beta-D-ribosyl)imidazole-4-carboxamide = 5-formamido-1-(5-phospho-D-ribosyl)imidazole-4-carboxamide + (6S)-5,6,7,8-tetrahydrofolate. It carries out the reaction IMP + H2O = 5-formamido-1-(5-phospho-D-ribosyl)imidazole-4-carboxamide. It participates in purine metabolism; IMP biosynthesis via de novo pathway; 5-formamido-1-(5-phospho-D-ribosyl)imidazole-4-carboxamide from 5-amino-1-(5-phospho-D-ribosyl)imidazole-4-carboxamide (10-formyl THF route): step 1/1. Its pathway is purine metabolism; IMP biosynthesis via de novo pathway; IMP from 5-formamido-1-(5-phospho-D-ribosyl)imidazole-4-carboxamide: step 1/1. The sequence is that of Bifunctional purine biosynthesis protein PurH from Prochlorococcus marinus (strain NATL1A).